Consider the following 156-residue polypeptide: ATP synthase subunit b 1 (156 aa).

Residues 5 to 27 (FTLISQAMAFAIFIWFTVRFVWP) traverse the membrane as a helical segment.

It belongs to the ATPase B chain family. As to quaternary structure, F-type ATPases have 2 components, F(1) - the catalytic core - and F(0) - the membrane proton channel. F(1) has five subunits: alpha(3), beta(3), gamma(1), delta(1), epsilon(1). F(0) has three main subunits: a(1), b(2) and c(10-14). The alpha and beta chains form an alternating ring which encloses part of the gamma chain. F(1) is attached to F(0) by a central stalk formed by the gamma and epsilon chains, while a peripheral stalk is formed by the delta and b chains.

Its subcellular location is the cell inner membrane. In terms of biological role, f(1)F(0) ATP synthase produces ATP from ADP in the presence of a proton or sodium gradient. F-type ATPases consist of two structural domains, F(1) containing the extramembraneous catalytic core and F(0) containing the membrane proton channel, linked together by a central stalk and a peripheral stalk. During catalysis, ATP synthesis in the catalytic domain of F(1) is coupled via a rotary mechanism of the central stalk subunits to proton translocation. Its function is as follows. Component of the F(0) channel, it forms part of the peripheral stalk, linking F(1) to F(0). The polypeptide is ATP synthase subunit b 1 (Nitrosospira multiformis (strain ATCC 25196 / NCIMB 11849 / C 71)).